Here is a 470-residue protein sequence, read N- to C-terminus: Ribulose bisphosphate carboxylase large chain (470 aa).

Residues Asn115 and Thr165 each contribute to the substrate site. Lys167 serves as the catalytic Proton acceptor. Residue Lys169 coordinates substrate. Mg(2+) contacts are provided by Lys193, Asp195, and Glu196. Position 193 is an N6-carboxylysine (Lys193). The active-site Proton acceptor is His286. Arg287, His319, and Ser371 together coordinate substrate.

It belongs to the RuBisCO large chain family. Type I subfamily. As to quaternary structure, heterohexadecamer of 8 large chains and 8 small chains. Forms a CsoS2-CsoS1-RuBisCO complex. Mg(2+) serves as cofactor.

It localises to the carboxysome. It carries out the reaction 2 (2R)-3-phosphoglycerate + 2 H(+) = D-ribulose 1,5-bisphosphate + CO2 + H2O. The catalysed reaction is D-ribulose 1,5-bisphosphate + O2 = 2-phosphoglycolate + (2R)-3-phosphoglycerate + 2 H(+). Its function is as follows. RuBisCO catalyzes two reactions: the carboxylation of D-ribulose 1,5-bisphosphate, the primary event in carbon dioxide fixation, as well as the oxidative fragmentation of the pentose substrate in the photorespiration process. Both reactions occur simultaneously and in competition at the same active site. This is Ribulose bisphosphate carboxylase large chain from Prochlorococcus marinus (strain MIT 9313).